Here is a 455-residue protein sequence, read N- to C-terminus: Probable glycine dehydrogenase (decarboxylating) subunit 1 (455 aa).

It belongs to the GcvP family. N-terminal subunit subfamily. The glycine cleavage system is composed of four proteins: P, T, L and H. In this organism, the P 'protein' is a heterodimer of two subunits.

The catalysed reaction is N(6)-[(R)-lipoyl]-L-lysyl-[glycine-cleavage complex H protein] + glycine + H(+) = N(6)-[(R)-S(8)-aminomethyldihydrolipoyl]-L-lysyl-[glycine-cleavage complex H protein] + CO2. Functionally, the glycine cleavage system catalyzes the degradation of glycine. The P protein binds the alpha-amino group of glycine through its pyridoxal phosphate cofactor; CO(2) is released and the remaining methylamine moiety is then transferred to the lipoamide cofactor of the H protein. The protein is Probable glycine dehydrogenase (decarboxylating) subunit 1 of Saccharolobus islandicus (strain M.16.27) (Sulfolobus islandicus).